The chain runs to 373 residues: Probable jasmonic acid carboxyl methyltransferase 2 (373 aa).

Tyr18 provides a ligand contact to S-adenosyl-L-homocysteine. Gln25 contacts jasmonate. The S-adenosyl-L-homocysteine site is built by Cys59, Asn64, Asp96, Leu97, Ser135, and Phe136. Residues His156 and Trp157 each contribute to the jasmonate site. Residues Asn174, Asp260, Phe262, and Asn263 each coordinate Mg(2+).

It belongs to the methyltransferase superfamily. Type-7 methyltransferase family. It depends on Mg(2+) as a cofactor.

The protein localises to the cytoplasm. The protein resides in the nucleus. It catalyses the reaction jasmonate + S-adenosyl-L-methionine = methyl (-)-jasmonate + S-adenosyl-L-homocysteine. The protein operates within lipid metabolism; oxylipin biosynthesis. Functionally, catalyzes the methylation of jasmonate into methyljasmonate, a plant volatile that acts as an important cellular regulator mediating diverse developmental processes and defense responses. This is Probable jasmonic acid carboxyl methyltransferase 2 from Theobroma cacao (Cacao).